A 165-amino-acid chain; its full sequence is MPLNREDKQAVVAEVAAQVAKAQTVVLAEYRGIAVGDLTTLRAKAREQKVYLRVLKNTLARRAVEGTPFAPLAEQMTGPLIYGISEDAIAAAKVVNDFSKSNDKLVIKAGSFDGKVMDKAGVQALASIPSREELLSKLLFVMQAPVSGFARALAALAEKKQAEAA.

It belongs to the universal ribosomal protein uL10 family. In terms of assembly, part of the ribosomal stalk of the 50S ribosomal subunit. The N-terminus interacts with L11 and the large rRNA to form the base of the stalk. The C-terminus forms an elongated spine to which L12 dimers bind in a sequential fashion forming a multimeric L10(L12)X complex.

In terms of biological role, forms part of the ribosomal stalk, playing a central role in the interaction of the ribosome with GTP-bound translation factors. In Burkholderia multivorans (strain ATCC 17616 / 249), this protein is Large ribosomal subunit protein uL10.